Consider the following 536-residue polypeptide: Copine-1 (536 aa).

2 C2 domains span residues 1-113 (MAHC…TLPL) and 122-244 (GRGT…ECIH). Ca(2+) contacts are provided by Asp21, Asp27, Asp79, Asp81, Asp91, Asp152, and Asp158. Lys170 carries the post-translational modification N6-acetyllysine. Ca(2+) is bound by residues Asp213, Asp215, and Asp221. Residues 282-484 (QINFTVGVDF…AARDIVQFVP (203 aa)) enclose the VWFA domain.

The protein belongs to the copine family. As to quaternary structure, homodimer; homodimerizes via its C2 domains. Interacts with p65/RELA (via N-terminus); this interaction induces proteolytic cleavage of p65/RELA subunit and inhibition of NF-kappa-B transcriptional activity. Interacts (via VWFA domain) with ACTB, CCDC22, MYCBP2, PPP5C, RDX and UBE2O. Requires Ca(2+) as cofactor. In terms of tissue distribution, expressed in liver, brain, heart, intestine, kidney and lung (at protein level).

The protein resides in the nucleus. The protein localises to the cytoplasm. Its subcellular location is the cell membrane. In terms of biological role, calcium-dependent phospholipid-binding protein that plays a role in calcium-mediated intracellular processes. Involved in the TNF-alpha receptor signaling pathway in a calcium-dependent manner. Exhibits calcium-dependent phospholipid binding properties. Plays a role in neuronal progenitor cell differentiation; induces neurite outgrowth via a AKT-dependent signaling cascade and calcium-independent manner. May recruit target proteins to the cell membrane in a calcium-dependent manner. May function in membrane trafficking. Involved in TNF-alpha-induced NF-kappa-B transcriptional repression by inducing endoprotease processing of the transcription factor NF-kappa-B p65/RELA subunit. Also induces endoprotease processing of NF-kappa-B p50/NFKB1, p52/NFKB2, RELB and REL. The chain is Copine-1 from Rattus norvegicus (Rat).